A 461-amino-acid polypeptide reads, in one-letter code: Cysteine--tRNA ligase (461 aa).

C28 serves as a coordination point for Zn(2+). Residues 30–40 (VTIYDLCHIGH) carry the 'HIGH' region motif. 3 residues coordinate Zn(2+): C209, H234, and E238. A 'KMSKS' region motif is present at residues 266 to 270 (KMSKS). K269 is a binding site for ATP.

The protein belongs to the class-I aminoacyl-tRNA synthetase family. Monomer. Zn(2+) is required as a cofactor.

It is found in the cytoplasm. It catalyses the reaction tRNA(Cys) + L-cysteine + ATP = L-cysteinyl-tRNA(Cys) + AMP + diphosphate. This is Cysteine--tRNA ligase from Serratia proteamaculans (strain 568).